The chain runs to 115 residues: Superoxide reductase (115 aa).

Fe cation contacts are provided by Glu-14, His-16, His-41, His-47, Cys-102, and His-105.

The protein belongs to the desulfoferrodoxin family. As to quaternary structure, homotetramer. The cofactor is Fe cation.

It carries out the reaction reduced [rubredoxin] + superoxide + 2 H(+) = oxidized [rubredoxin] + H2O2. Its function is as follows. Uses electrons from reduced NADP, by way of rubredoxin and an oxidoreductase, to catalyze the reduction of superoxide to hydrogen peroxide. This is Superoxide reductase (sorA) from Pyrococcus abyssi (strain GE5 / Orsay).